Consider the following 661-residue polypeptide: 72 kDa type IV collagenase (661 aa).

Positions 1 to 30 (MTEARVSRGALAALLRALCALGCLLGRAAA) are cleaved as a signal peptide. The propeptide at 31-110 (APSPIIKFPG…PRCGNPDVAN (80 aa)) is activation peptide. The Cysteine switch motif lies at 101–108 (PRCGNPDV). Cys103 lines the Zn(2+) pocket. The interval 111–222 (YNFFPRKPKW…LRTLGEGQVV (112 aa)) is collagenase-like 1. Positions 135 and 169 each coordinate Ca(2+). Residues His179 and Asp181 each coordinate Zn(2+). Residues Asp186 and Gly187 each coordinate Ca(2+). Residue His194 coordinates Zn(2+). Ca(2+)-binding residues include Gly201, Gly203, and Asp205. His207 contributes to the Zn(2+) binding site. Residues Asp209, Asp210, and Glu212 each contribute to the Ca(2+) site. Residues 223–397 (RVKYGNADGE…WGFCPDQGYS (175 aa)) are collagen-binding. 3 Fibronectin type-II domains span residues 229–277 (ADGE…FCPH), 287–335 (ADGQ…FCPE), and 345–393 (SEGA…FCPD). Intrachain disulfides connect Cys234–Cys260, Cys248–Cys275, Cys292–Cys318, Cys306–Cys333, Cys350–Cys376, and Cys364–Cys391. A collagenase-like 2 region spans residues 398–466 (LFLVAAHEFG…GPTPTLGPVT (69 aa)). His404 contacts Zn(2+). The active site involves Glu405. Zn(2+) contacts are provided by His408 and His414. Residues 415-661 (SQDPGALMAP…GSIKSDWLGC (247 aa)) form a required for inhibitor TIMP2 binding region. Hemopexin repeat units follow at residues 469 to 517 (LCKQ…WPEL), 518 to 564 (PEKI…GLPP), 566 to 614 (VQKV…WNAI), and 615 to 661 (PDNL…WLGC). Cys470 and Cys661 are disulfide-bonded. Residues Asp477, Asp522, and Asp570 each coordinate Ca(2+). N-linked (GlcNAc...) asparagine glycosylation is present at Asn574. Asp619 lines the Ca(2+) pocket. Asn643 carries N-linked (GlcNAc...) asparagine glycosylation.

This sequence belongs to the peptidase M10A family. As to quaternary structure, interacts (via the C-terminal hemopexin-like domains-containing region) with the integrin alpha-V/beta-3; the interaction promotes vascular invasion in angiogenic vessels and melamoma cells. Interacts (via the C-terminal PEX domain) with TIMP2 (via the C-terminal); the interaction inhibits the degradation activity. Interacts with GSK3B. Ca(2+) is required as a cofactor. The cofactor is Zn(2+). Post-translationally, phosphorylation on multiple sites modulates enzymatic activity. Phosphorylated by PKC in vitro. In terms of processing, the propeptide is processed by MMP14 (MT-MMP1) and MMP16 (MT-MMP3). Autocatalytic cleavage in the C-terminal produces the anti-angiogenic peptide, PEX. This processing appears to be facilitated by binding integrinv/beta3.

Its subcellular location is the secreted. It localises to the extracellular space. The protein resides in the extracellular matrix. The protein localises to the membrane. It is found in the nucleus. It catalyses the reaction Cleavage of gelatin type I and collagen types IV, V, VII, X. Cleaves the collagen-like sequence Pro-Gln-Gly-|-Ile-Ala-Gly-Gln.. Its function is as follows. Ubiquitinous metalloproteinase that is involved in diverse functions such as remodeling of the vasculature, angiogenesis, tissue repair, tumor invasion, inflammation, and atherosclerotic plaque rupture. As well as degrading extracellular matrix proteins, can also act on several nonmatrix proteins such as big endothelial 1 and beta-type CGRP promoting vasoconstriction. Also cleaves KISS at a Gly-|-Leu bond. Appears to have a role in myocardial cell death pathways. Contributes to myocardial oxidative stress by regulating the activity of GSK3beta. Cleaves GSK3beta in vitro. Involved in the formation of the fibrovascular tissues. In terms of biological role, PEX, the C-terminal non-catalytic fragment of MMP2, possesses anti-angiogenic and anti-tumor properties and inhibits cell migration and cell adhesion to FGF2 and vitronectin. Ligand for integrin alpha-v/beta-3 on the surface of blood vessels. The chain is 72 kDa type IV collagenase (MMP2) from Bos taurus (Bovine).